We begin with the raw amino-acid sequence, 332 residues long: Holliday junction branch migration complex subunit RuvB (332 aa).

The tract at residues 1–181 (MTRFLDSDAM…FGITGHMEYY (181 aa)) is large ATPase domain (RuvB-L). Residues leucine 20, arginine 21, glycine 62, lysine 65, threonine 66, threonine 67, 128–130 (EDF), arginine 171, tyrosine 181, and arginine 218 contribute to the ATP site. Threonine 66 serves as a coordination point for Mg(2+). A small ATPAse domain (RuvB-S) region spans residues 182–252 (EENDLTEIIE…ITDKALTMLD (71 aa)). The tract at residues 255-332 (HEGLDYVDQK…EHLGYQRFDK (78 aa)) is head domain (RuvB-H). The DNA site is built by arginine 291, arginine 310, arginine 312, and arginine 315.

It belongs to the RuvB family. As to quaternary structure, homohexamer. Forms an RuvA(8)-RuvB(12)-Holliday junction (HJ) complex. HJ DNA is sandwiched between 2 RuvA tetramers; dsDNA enters through RuvA and exits via RuvB. An RuvB hexamer assembles on each DNA strand where it exits the tetramer. Each RuvB hexamer is contacted by two RuvA subunits (via domain III) on 2 adjacent RuvB subunits; this complex drives branch migration. In the full resolvosome a probable DNA-RuvA(4)-RuvB(12)-RuvC(2) complex forms which resolves the HJ.

Its subcellular location is the cytoplasm. The catalysed reaction is ATP + H2O = ADP + phosphate + H(+). In terms of biological role, the RuvA-RuvB-RuvC complex processes Holliday junction (HJ) DNA during genetic recombination and DNA repair, while the RuvA-RuvB complex plays an important role in the rescue of blocked DNA replication forks via replication fork reversal (RFR). RuvA specifically binds to HJ cruciform DNA, conferring on it an open structure. The RuvB hexamer acts as an ATP-dependent pump, pulling dsDNA into and through the RuvAB complex. RuvB forms 2 homohexamers on either side of HJ DNA bound by 1 or 2 RuvA tetramers; 4 subunits per hexamer contact DNA at a time. Coordinated motions by a converter formed by DNA-disengaged RuvB subunits stimulates ATP hydrolysis and nucleotide exchange. Immobilization of the converter enables RuvB to convert the ATP-contained energy into a lever motion, pulling 2 nucleotides of DNA out of the RuvA tetramer per ATP hydrolyzed, thus driving DNA branch migration. The RuvB motors rotate together with the DNA substrate, which together with the progressing nucleotide cycle form the mechanistic basis for DNA recombination by continuous HJ branch migration. Branch migration allows RuvC to scan DNA until it finds its consensus sequence, where it cleaves and resolves cruciform DNA. This Streptococcus agalactiae serotype Ia (strain ATCC 27591 / A909 / CDC SS700) protein is Holliday junction branch migration complex subunit RuvB.